The following is a 342-amino-acid chain: Cilia- and flagella-associated protein 36 (342 aa).

Residues Ser85 and Ser147 each carry the phosphoserine modification. Residues 150-187 (EHEEMKILREVLRKSKEEYDQEEERKRKKQLSEAKTEE) adopt a coiled-coil conformation. The disordered stretch occupies residues 166 to 194 (EEYDQEEERKRKKQLSEAKTEEPTVHSSE). Positions 179–189 (QLSEAKTEEPT) are enriched in basic and acidic residues. Position 201 is a phosphoserine (Ser201). Disordered regions lie at residues 229–250 (RKVE…PGLE) and 282–322 (KLMS…AEEK). Composition is skewed to basic and acidic residues over residues 282–292 (KLMSMRKDMRT) and 300–322 (QKGK…AEEK).

It belongs to the CFAP36 family. Interacts with ARL3. In terms of tissue distribution, expressed in several human tissues including brain, testis, heart, lung, pancreas and spleen (at protein level).

Its subcellular location is the nucleus. It is found in the cytoplasm. The protein resides in the cell projection. The protein localises to the cilium. It localises to the flagellum. Functionally, may act as an effector for ARL3. This is Cilia- and flagella-associated protein 36 (CFAP36) from Homo sapiens (Human).